The following is a 314-amino-acid chain: Ribosomal protein L11 methyltransferase (314 aa).

Residues T166, G187, D209, and N251 each contribute to the S-adenosyl-L-methionine site.

This sequence belongs to the methyltransferase superfamily. PrmA family.

The protein localises to the cytoplasm. It catalyses the reaction L-lysyl-[protein] + 3 S-adenosyl-L-methionine = N(6),N(6),N(6)-trimethyl-L-lysyl-[protein] + 3 S-adenosyl-L-homocysteine + 3 H(+). Methylates ribosomal protein L11. This is Ribosomal protein L11 methyltransferase from Clostridium tetani (strain Massachusetts / E88).